Here is a 128-residue protein sequence, read N- to C-terminus: 3-aminoacrylate deaminase RutC (128 aa).

Belongs to the RutC family.

The enzyme catalyses (Z)-3-aminoacrylate + H2O + H(+) = 3-oxopropanoate + NH4(+). Involved in pyrimidine catabolism. Catalyzes the deamination of 3-aminoacrylate to malonic semialdehyde, a reaction that can also occur spontaneously. RutC may facilitate the reaction and modulate the metabolic fitness, rather than catalyzing essential functions. The sequence is that of 3-aminoacrylate deaminase RutC from Enterobacter sp. (strain 638).